Here is a 608-residue protein sequence, read N- to C-terminus: Isocitrate dehydrogenase kinase/phosphatase (608 aa).

ATP-binding positions include 328–334 (APGIKGL) and K349. D384 is a catalytic residue.

This sequence belongs to the AceK family.

The protein resides in the cytoplasm. It carries out the reaction L-seryl-[isocitrate dehydrogenase] + ATP = O-phospho-L-seryl-[isocitrate dehydrogenase] + ADP + H(+). Functionally, bifunctional enzyme which can phosphorylate or dephosphorylate isocitrate dehydrogenase (IDH) on a specific serine residue. This is a regulatory mechanism which enables bacteria to bypass the Krebs cycle via the glyoxylate shunt in response to the source of carbon. When bacteria are grown on glucose, IDH is fully active and unphosphorylated, but when grown on acetate or ethanol, the activity of IDH declines drastically concomitant with its phosphorylation. In Cupriavidus pinatubonensis (strain JMP 134 / LMG 1197) (Cupriavidus necator (strain JMP 134)), this protein is Isocitrate dehydrogenase kinase/phosphatase.